We begin with the raw amino-acid sequence, 281 residues long: Inhibitor of growth protein 2 (281 aa).

Residues 49–101 (VLRELDNKYQETLKEIDDVYEKYKKEDDSNQKKRLQQHLQRALINSQELGDEK) are a coiled coil. The tract at residues 123–204 (SQCFQDPAES…AKQEREASPV (82 aa)) is disordered. Residues 131 to 141 (ESERASDKSKM) are compositionally biased toward basic and acidic residues. The segment covering 182–194 (KRSKSAKKKKRSK) has biased composition (basic residues). Lysine 196 is covalently cross-linked (Glycyl lysine isopeptide (Lys-Gly) (interchain with G-Cter in SUMO1)). The PHD-type zinc finger occupies 213–262 (PTYCLCNQVSYGEMIGCDNEQCPIEWFHFSCVSLTYKPKGKWYCPKCRGD). Zn(2+) contacts are provided by cysteine 216, cysteine 218, cysteine 229, cysteine 234, histidine 240, cysteine 243, cysteine 256, and cysteine 259. A compositionally biased stretch (basic and acidic residues) spans 261 to 275 (GDNEKTMDKSTEKTK). The disordered stretch occupies residues 261-281 (GDNEKTMDKSTEKTKKERRAR). The segment at 265 to 281 (KTMDKSTEKTKKERRAR) is PBR.

The protein belongs to the ING family. In terms of assembly, interacts with H3K4me3 and to a lesser extent with H3K4me2. Component of a mSin3A-like complex at least consisting of SIN3A, HDAC1, HDAC2, RBBP4/RbAp48, RBBP7/RbAp46, SAP30 and ING2. Sumoylation enhances its association with SIN3A and is required for binding to some target gene promoters, this is the case for TMEM71.

The protein localises to the nucleus. In terms of biological role, seems to be involved in p53/TP53 activation and p53/TP53-dependent apoptotic pathways, probably by enhancing acetylation of p53/TP53. Component of a mSin3A-like corepressor complex, which is probably involved in deacetylation of nucleosomal histones. ING2 activity seems to be modulated by binding to phosphoinositides (PtdInsPs). This chain is Inhibitor of growth protein 2 (Ing2), found in Mus musculus (Mouse).